Consider the following 1216-residue polypeptide: ATP-dependent helicase/nuclease subunit A (1216 aa).

The 463-residue stretch at 26–488 (QKKTAEQIEA…ILLKENFRSS (463 aa)) folds into the UvrD-like helicase ATP-binding domain. 47–54 (ASAGSGKT) lines the ATP pocket. Residues 515–802 (KHQLVFANTK…ELMTIHKSKG (288 aa)) form the UvrD-like helicase C-terminal domain.

This sequence belongs to the helicase family. AddA subfamily. In terms of assembly, heterodimer of AddA and AddB/RexB. Requires Mg(2+) as cofactor.

The enzyme catalyses Couples ATP hydrolysis with the unwinding of duplex DNA by translocating in the 3'-5' direction.. It carries out the reaction ATP + H2O = ADP + phosphate + H(+). Functionally, the heterodimer acts as both an ATP-dependent DNA helicase and an ATP-dependent, dual-direction single-stranded exonuclease. Recognizes the chi site generating a DNA molecule suitable for the initiation of homologous recombination. The AddA nuclease domain is required for chi fragment generation; this subunit has the helicase and 3' -&gt; 5' nuclease activities. This Streptococcus pneumoniae (strain Hungary19A-6) protein is ATP-dependent helicase/nuclease subunit A.